The sequence spans 425 residues: Enolase (425 aa).

(2R)-2-phosphoglycerate is bound at residue Q162. E204 (proton donor) is an active-site residue. Residues D241, E282, and D309 each coordinate Mg(2+). 4 residues coordinate (2R)-2-phosphoglycerate: K334, R363, S364, and K385. Catalysis depends on K334, which acts as the Proton acceptor.

This sequence belongs to the enolase family. The cofactor is Mg(2+).

It is found in the cytoplasm. The protein localises to the secreted. The protein resides in the cell surface. The catalysed reaction is (2R)-2-phosphoglycerate = phosphoenolpyruvate + H2O. It functions in the pathway carbohydrate degradation; glycolysis; pyruvate from D-glyceraldehyde 3-phosphate: step 4/5. Catalyzes the reversible conversion of 2-phosphoglycerate (2-PG) into phosphoenolpyruvate (PEP). It is essential for the degradation of carbohydrates via glycolysis. The sequence is that of Enolase from Corynebacterium urealyticum (strain ATCC 43042 / DSM 7109).